A 197-amino-acid chain; its full sequence is Imidazoleglycerol-phosphate dehydratase (197 aa).

The protein belongs to the imidazoleglycerol-phosphate dehydratase family.

Its subcellular location is the cytoplasm. The catalysed reaction is D-erythro-1-(imidazol-4-yl)glycerol 3-phosphate = 3-(imidazol-4-yl)-2-oxopropyl phosphate + H2O. Its pathway is amino-acid biosynthesis; L-histidine biosynthesis; L-histidine from 5-phospho-alpha-D-ribose 1-diphosphate: step 6/9. This is Imidazoleglycerol-phosphate dehydratase from Pseudomonas syringae pv. syringae (strain B728a).